Reading from the N-terminus, the 293-residue chain is Glutamyl-Q tRNA(Asp) synthetase (293 aa).

Residues 26 to 30 (RYAPS) and D62 contribute to the L-glutamate site. The 'HIGH' region motif lies at 29–39 (PSPTGALHLGN). Zn(2+) contacts are provided by C118, C120, Y131, and C135. 2 residues coordinate L-glutamate: Y178 and R196. The 'KMSKS' region motif lies at 234-238 (KLSKR). K237 provides a ligand contact to ATP.

This sequence belongs to the class-I aminoacyl-tRNA synthetase family. GluQ subfamily. Requires Zn(2+) as cofactor.

In terms of biological role, catalyzes the tRNA-independent activation of glutamate in presence of ATP and the subsequent transfer of glutamate onto a tRNA(Asp). Glutamate is transferred on the 2-amino-5-(4,5-dihydroxy-2-cyclopenten-1-yl) moiety of the queuosine in the wobble position of the QUC anticodon. This Parasynechococcus marenigrum (strain WH8102) protein is Glutamyl-Q tRNA(Asp) synthetase.